Reading from the N-terminus, the 363-residue chain is Aminomethyltransferase (363 aa).

The protein belongs to the GcvT family. As to quaternary structure, the glycine cleavage system is composed of four proteins: P, T, L and H.

It catalyses the reaction N(6)-[(R)-S(8)-aminomethyldihydrolipoyl]-L-lysyl-[protein] + (6S)-5,6,7,8-tetrahydrofolate = N(6)-[(R)-dihydrolipoyl]-L-lysyl-[protein] + (6R)-5,10-methylene-5,6,7,8-tetrahydrofolate + NH4(+). The glycine cleavage system catalyzes the degradation of glycine. The sequence is that of Aminomethyltransferase from Thioalkalivibrio sulfidiphilus (strain HL-EbGR7).